A 242-amino-acid chain; its full sequence is NADH-quinone oxidoreductase subunit C (242 aa).

Positions 67 to 101 (VVNSVGLGHKEQGAKPITNRRTTSDNVGESKSIDY) are insert.

Belongs to the complex I 30 kDa subunit family. NDH-1 is composed of 14 different subunits. Subunits NuoB, C, D, E, F, and G constitute the peripheral sector of the complex.

Its subcellular location is the cell inner membrane. It carries out the reaction a quinone + NADH + 5 H(+)(in) = a quinol + NAD(+) + 4 H(+)(out). NDH-1 shuttles electrons from NADH, via FMN and iron-sulfur (Fe-S) centers, to quinones in the respiratory chain. The immediate electron acceptor for the enzyme in this species is believed to be ubiquinone. Couples the redox reaction to proton translocation (for every two electrons transferred, four hydrogen ions are translocated across the cytoplasmic membrane), and thus conserves the redox energy in a proton gradient. The chain is NADH-quinone oxidoreductase subunit C from Rickettsia conorii (strain ATCC VR-613 / Malish 7).